The following is a 272-amino-acid chain: Glutamate racemase (272 aa).

Substrate-binding positions include 13–14 (DS) and 45–46 (YG). Catalysis depends on Cys76, which acts as the Proton donor/acceptor. 77-78 (NT) contacts substrate. Catalysis depends on Cys187, which acts as the Proton donor/acceptor. Residue 188–189 (TH) coordinates substrate.

Belongs to the aspartate/glutamate racemases family.

The catalysed reaction is L-glutamate = D-glutamate. It functions in the pathway cell wall biogenesis; peptidoglycan biosynthesis. Provides the (R)-glutamate required for cell wall biosynthesis. This is Glutamate racemase from Roseiflexus sp. (strain RS-1).